Reading from the N-terminus, the 90-residue chain is DNA-binding protein HU-alpha (90 aa).

Belongs to the bacterial histone-like protein family. Heterodimer of an alpha and a beta chain.

Its function is as follows. Histone-like DNA-binding protein which is capable of wrapping DNA to stabilize it, and thus to prevent its denaturation under extreme environmental conditions. In Salmonella typhi, this protein is DNA-binding protein HU-alpha (hupA).